Reading from the N-terminus, the 539-residue chain is T-complex protein 1 subunit delta (539 aa).

Residues 1–29 (MPENVAPRSGATAGAAGGRGKGAYQDRDK) are disordered. R19 is subject to Omega-N-methylarginine. K21 is subject to N6-acetyllysine. S36 carries the post-translational modification Phosphoserine. Residue G53 participates in ADP binding. G53 is an ATP binding site. Mg(2+) is bound at residue D104. ADP-binding residues include G105, T106, T107, S108, N172, S173, and K174. ATP is bound by residues G105 and T106. K174 contributes to the ATP binding site. Phosphoserine is present on residues S184 and S202. K288, K302, K319, and K326 each carry N6-acetyllysine. Residue G425 coordinates ADP. Position 444 is a phosphoserine (S444). Residue Q510 coordinates ADP.

This sequence belongs to the TCP-1 chaperonin family. As to quaternary structure, component of the chaperonin-containing T-complex (TRiC), a hexadecamer composed of two identical back-to-back stacked rings enclosing a protein folding chamber. Each ring is made up of eight different subunits: TCP1/CCT1, CCT2, CCT3, CCT4, CCT5, CCT6A/CCT6, CCT7, CCT8. Interacts with PACRG. Interacts with DNAAF4. Interacts with DLEC1.

It is found in the cytoplasm. It localises to the melanosome. The protein localises to the cytoskeleton. The protein resides in the microtubule organizing center. Its subcellular location is the centrosome. It is found in the cilium basal body. It carries out the reaction ATP + H2O = ADP + phosphate + H(+). Its function is as follows. Component of the chaperonin-containing T-complex (TRiC), a molecular chaperone complex that assists the folding of actin, tubulin and other proteins upon ATP hydrolysis. The TRiC complex mediates the folding of WRAP53/TCAB1, thereby regulating telomere maintenance. As part of the TRiC complex may play a role in the assembly of BBSome, a complex involved in ciliogenesis regulating transports vesicles to the cilia. In Homo sapiens (Human), this protein is T-complex protein 1 subunit delta (CCT4).